Consider the following 226-residue polypeptide: Chalcone--flavanone isomerase 2-A (226 aa).

Substrate-binding residues include T49, N114, and S191.

Belongs to the chalcone isomerase family. In terms of tissue distribution, mostly expressed in flowers, and, to a lower extent, in roots, shoots, and seeds.

It catalyses the reaction a chalcone = a flavanone.. It functions in the pathway secondary metabolite biosynthesis; flavonoid biosynthesis. Its function is as follows. Catalyzes the intramolecular cyclization of bicyclic chalcones into tricyclic (S)-flavanones. Responsible for the isomerization of 4,2',4',6'-tetrahydroxychalcone (also termed chalcone) into naringenin. The sequence is that of Chalcone--flavanone isomerase 2-A (CHI2-A) from Glycine max (Soybean).